Consider the following 323-residue polypeptide: MSQNSSFSDIFEDGCDLTYDPLPENLKYLTQLFYMVPGIIIHFRILSIMLFQHRKIYMIQSFFIIFSMDSIASLTQLILDLFIQRVIIYIPQLCPSLYPLFEHYVLFPNIIFSIYNYMRAAKSIIQIFLTVNRMTCVLAPLRYSQIWRRFIPVTIAFITLSPFLVIWNVIISETFPVSIFGGFTLAYTKRVRWASLSMFQMIFMAISLTITVFTTSITLFKMRRLENRLKSSERTLCFASFYMSAAFFSAALFQSYFAFFSITAAYTDLVYFLQGFAFDVLNVGSPIVMVLISGQLRYHVIPVKSMAPKHSTVVSVTSVIRKT.

7 helical membrane-spanning segments follow: residues 31-51 (QLFY…IMLF), 63-83 (FIIF…DLFI), 98-117 (YPLF…IYNY), 151-171 (IPVT…NVII), 193-213 (WASL…ITVF), 245-265 (AAFF…ITAA), and 272-292 (FLQG…MVLI).

The protein belongs to the nematode receptor-like protein srg family.

It localises to the membrane. This chain is Serpentine receptor class gamma-5 (srg-5), found in Caenorhabditis elegans.